Here is a 159-residue protein sequence, read N- to C-terminus: MQKRAIYPGTFDPITNGHLDIVTRATQMFDHVILAIAASPGKKPMFTLNERVALAQKATAHLGNVEVVGFSDLMANFARDRQANILIRGLRAVADFEYEMQLAHMNRHLMPQLESVFLMPSKEWSFISSSLVKEVARHQGDVTHFLPDNVHQALMDKLK.

T10 provides a ligand contact to substrate. ATP is bound by residues 10–11 (TF) and H18. Positions 42, 74, and 88 each coordinate substrate. ATP contacts are provided by residues 89–91 (GLR), E99, and 124–130 (WSFISSS).

Belongs to the bacterial CoaD family. As to quaternary structure, homohexamer. Mg(2+) serves as cofactor.

The protein resides in the cytoplasm. It catalyses the reaction (R)-4'-phosphopantetheine + ATP + H(+) = 3'-dephospho-CoA + diphosphate. It functions in the pathway cofactor biosynthesis; coenzyme A biosynthesis; CoA from (R)-pantothenate: step 4/5. Its function is as follows. Reversibly transfers an adenylyl group from ATP to 4'-phosphopantetheine, yielding dephospho-CoA (dPCoA) and pyrophosphate. The chain is Phosphopantetheine adenylyltransferase from Salmonella paratyphi A (strain ATCC 9150 / SARB42).